A 582-amino-acid chain; its full sequence is MHNDKDLSTWQTFRRLWPTIAPFKAGLIVAGIALILNAASDTFMLSLLKPLLDDGFGKTDRSVLLWMPLVVIGLMILRGITSYISSYCISWVSGKVVMTMRRRLFGHMMGMPVAFFDKQSTGTLLSRITYDSEQVASSSSGALITVVREGASIIGLFIMMFYYSWQLSIILVVLAPIVSIAIRVVSKRFRSISKNMQNTMGQVTTSAEQMLKGHKEVLIFGGQEVETKRFDKVSNKMRLQGMKMVSASSISDPIIQLIASLALAFVLYAASFPSVMDSLTAGTITVVFSSMIALMRPLKSLTNVNAQFQRGMAACQTLFAILDSEQEKDEGKRVIDRATGDLEFRNVTFTYPGREVPALRNINLKIPAGKTVALVGRSGSGKSTIASLITRFYDIDEGHILMDGHDLREYTLASLRNQVALVSQNVHLFNDTVANNIAYARTEEYSREQIEEAARMAYAMDFINKMDNGLDTIIGENGVLLSGGQRQRIAIARALLRDSPILILDEATSALDTESERAIQAALDELQKNRTSLMIAHRLSTIEQADEIVVVEDGIIVERGTHSELLAQHGVYAQLHKMQFGQ.

5 helical membrane-spanning segments follow: residues 16–36 (LWPT…ALIL), 64–84 (LLWM…TSYI), 153–173 (IIGL…ILVV), 253–273 (PIIQ…ASFP), and 275–295 (VMDS…IALM). One can recognise an ABC transmembrane type-1 domain in the interval 28–310 (IVAGIALILN…LTNVNAQFQR (283 aa)). In terms of domain architecture, ABC transporter spans 342–578 (LEFRNVTFTY…HGVYAQLHKM (237 aa)). 376-383 (GRSGSGKS) serves as a coordination point for ATP.

This sequence belongs to the ABC transporter superfamily. Lipid exporter (TC 3.A.1.106) family. In terms of assembly, homodimer.

It localises to the cell inner membrane. It catalyses the reaction ATP + H2O + lipid A-core oligosaccharideSide 1 = ADP + phosphate + lipid A-core oligosaccharideSide 2.. In terms of biological role, involved in lipopolysaccharide (LPS) biosynthesis. Translocates lipid A-core from the inner to the outer leaflet of the inner membrane. Transmembrane domains (TMD) form a pore in the inner membrane and the ATP-binding domain (NBD) is responsible for energy generation. The protein is ATP-dependent lipid A-core flippase of Salmonella paratyphi A (strain ATCC 9150 / SARB42).